A 392-amino-acid polypeptide reads, in one-letter code: HCLS1-binding protein 3 (392 aa).

An N-acetylmethionine modification is found at Met-1. Ser-3, Ser-139, and Ser-194 each carry phosphoserine. In terms of domain architecture, PX spans 19 to 142; the sequence is GLDLTVPQHQ…EFLGTRSPGA (124 aa). Disordered regions lie at residues 138–162, 174–265, and 319–364; these read RSPGAAGLTSRDSSVLDGTDSQTGN, DQVA…PLKL, and GAEP…KPQE. Acidic residues predominate over residues 190-201; sequence DAEESLEEEEAL. Positions 208–220 are enriched in basic residues; it reads RSKKPKKHPKVAV. At Ser-249 the chain carries Phosphoserine. Positions 325–335 are enriched in pro residues; sequence KPQLKPKPPVA. At Lys-337 the chain carries N6-acetyllysine.

As to quaternary structure, binds HCLS1. Interacts with the SH3 domain of HCLS1 in vitro.

Its function is as follows. May be a modulator of IL-2 signaling. The chain is HCLS1-binding protein 3 (HS1BP3) from Homo sapiens (Human).